The sequence spans 574 residues: Putative thiamine pyrophosphate-containing protein YdaP (574 aa).

A coiled-coil region spans residues 28–55 (DSINEFIEELRHERNQLKFIQTRHEEVA). Residue E52 coordinates thiamine diphosphate. Residues 256–277 (IGTK…LGTS) and 294–313 (DSDP…LVCD) each bind FAD. The interval 384 to 464 (TVTVWMARHF…ITVVILNNEN (81 aa)) is thiamine pyrophosphate binding. Mg(2+) is bound by residues D435 and N462.

The protein belongs to the TPP enzyme family. It depends on Mg(2+) as a cofactor. The cofactor is thiamine diphosphate.

The polypeptide is Putative thiamine pyrophosphate-containing protein YdaP (ydaP) (Bacillus subtilis (strain 168)).